Consider the following 728-residue polypeptide: Glutamate--cysteine ligase (728 aa).

A disordered region spans residues 517 to 552 (PVRTTRRGGSASRSASGTSTPNSGSSRPATPPLGPV). The span at 523–536 (RGGSASRSASGTST) shows a compositional bias: low complexity.

It belongs to the glutamate--cysteine ligase type 3 family.

It carries out the reaction L-cysteine + L-glutamate + ATP = gamma-L-glutamyl-L-cysteine + ADP + phosphate + H(+). It functions in the pathway sulfur metabolism; glutathione biosynthesis; glutathione from L-cysteine and L-glutamate: step 1/2. This is Glutamate--cysteine ligase (gcs-1) from Neurospora crassa (strain ATCC 24698 / 74-OR23-1A / CBS 708.71 / DSM 1257 / FGSC 987).